We begin with the raw amino-acid sequence, 505 residues long: Folate transporter 1 (505 aa).

The next 4 helical transmembrane spans lie at 58–78 (SLIA…IYLL), 89–109 (LSIV…WAVI), 122–142 (YYLL…GLIT), and 146–166 (LFIT…CNVI). N177, N181, and N186 each carry an N-linked (GlcNAc...) asparagine glycan. The next 2 membrane-spanning stretches (helical) occupy residues 192-212 (AFRK…LLLI) and 216-236 (HIFL…FFII). N-linked (GlcNAc...) asparagine glycosylation occurs at N240. The next 5 membrane-spanning stretches (helical) occupy residues 266–286 (IIFI…FFYI), 300–320 (MAMF…LFFT), 326–346 (KLLL…LVVI), 352–372 (FLFI…EFIA), and 405–425 (FASI…NITS). N427 is a glycosylation site (N-linked (GlcNAc...) asparagine). The chain crosses the membrane as a helical span at residues 431 to 451 (LPYMIIICCLTNIIPIFFLYI). N454 is a glycosylation site (N-linked (GlcNAc...) asparagine).

The protein belongs to the major facilitator superfamily. Folate-biopterin transporter (TC 2.A.71) family.

It localises to the cell membrane. The enzyme catalyses folate(in) + H(+)(in) = folate(out) + H(+)(out). Its activity is regulated as follows. Transport of folates is inhibited by probenecid and methotrexate. Folate transporter with broad substrate specificity. Transports folic acid, folinic acid, pteroic acid, dihydropteroic acid, the folate precursor p-amino benzoic acid (pABA) and the human folate catabolite pABA monoglutamate. In Plasmodium falciparum (isolate 3D7), this protein is Folate transporter 1.